Consider the following 361-residue polypeptide: Mitogen-activated protein kinase 14A (361 aa).

The 285-residue stretch at 25-309 folds into the Protein kinase domain; it reads YQNLSPVGSG…AAEALAHPYF (285 aa). Residues 31–39 and K54 each bind ATP; that span reads VGSGAYGTV. D151 serves as the catalytic Proton acceptor. The residue at position 181 (T181) is a Phosphothreonine; by MAP2K6. A TXY motif is present at residues 181 to 183; sequence TGY. Y183 bears the Phosphotyrosine; by MAP2K6 mark.

It belongs to the protein kinase superfamily. CMGC Ser/Thr protein kinase family. MAP kinase subfamily. It depends on Mg(2+) as a cofactor. Dually phosphorylated on Thr-181 and Tyr-183, which activates the enzyme. In terms of tissue distribution, exclusively expressed in the ovary.

It is found in the cytoplasm. Its subcellular location is the nucleus. It catalyses the reaction L-seryl-[protein] + ATP = O-phospho-L-seryl-[protein] + ADP + H(+). The enzyme catalyses L-threonyl-[protein] + ATP = O-phospho-L-threonyl-[protein] + ADP + H(+). Its activity is regulated as follows. Activated by threonine and tyrosine phosphorylation by the dual specificity kinase, MKK6. Its function is as follows. Serine/threonine kinase which acts as an essential component of the MAP kinase signal transduction pathway. Mapk14a is one of the four p38 MAPKs which play an important role in the cascades of cellular responses evoked by extracellular stimuli such as pro-inflammatory cytokines or physical stress leading to direct activation of transcription factors. Accordingly, p38 MAPKs phosphorylate a broad range of proteins and it has been estimated that they may have approximately 200 to 300 substrates each. Some of the targets are downstream kinases which are activated through phosphorylation and further phosphorylate additional targets. This is Mitogen-activated protein kinase 14A (mapk14a) from Cyprinus carpio (Common carp).